Here is a 508-residue protein sequence, read N- to C-terminus: ATP synthase subunit alpha, chloroplastic (508 aa).

Position 170–177 (glycine 170–threonine 177) interacts with ATP.

Belongs to the ATPase alpha/beta chains family. In terms of assembly, F-type ATPases have 2 components, CF(1) - the catalytic core - and CF(0) - the membrane proton channel. CF(1) has five subunits: alpha(3), beta(3), gamma(1), delta(1), epsilon(1). CF(0) has four main subunits: a, b, b' and c.

The protein localises to the plastid. The protein resides in the chloroplast thylakoid membrane. It carries out the reaction ATP + H2O + 4 H(+)(in) = ADP + phosphate + 5 H(+)(out). Functionally, produces ATP from ADP in the presence of a proton gradient across the membrane. The alpha chain is a regulatory subunit. This Lactuca sativa (Garden lettuce) protein is ATP synthase subunit alpha, chloroplastic.